Here is a 491-residue protein sequence, read N- to C-terminus: Cytosolic Fe-S cluster assembly factor NAR1 (491 aa).

[4Fe-4S] cluster is bound by residues cysteine 20, cysteine 65, cysteine 68, cysteine 71, cysteine 177, cysteine 232, cysteine 414, and cysteine 418.

Belongs to the NARF family.

Functionally, component of the cytosolic Fe/S protein assembly machinery. Required for maturation of extramitochondrial Fe/S proteins. May play a role in the transfer of pre-assembled Fe/S clusters to target apoproteins. This is Cytosolic Fe-S cluster assembly factor NAR1 (NAR1) from Yarrowia lipolytica (strain CLIB 122 / E 150) (Yeast).